The following is a 523-amino-acid chain: MSQQVVIFDTTLRDGEQALQASLSVKEKLQIALALERMGVDVMEVGFPVSSPGDFESVQTIARTIKNSRVCALARCVEKDIDVAAESLKVAEAFRIHTFIATSPMHIATKLRSTLDEVIERAVYMIKRARHYTDDVEFSCEDAGRTPIADLARVVEAAINAGAKTINIPDTVGYTMPFEFSNIITGLYERVPNIDQAIISVHTHDDLGLAVGNAIAAVHAGARQVEGAMNGIGERAGNCSLEEVIMAIKVRKDIMNVQTRINHNEIWRTSQTVSQICNMPIPANKAIVGTGAFAHSSGIHQDGVLKNRENYEIMTPESIGLNQVQLNLTSRSGRAAVKHRMEEMGYKETDYNMDHLYDAFLKLADKKGQVFDYDLEAIAFINKQQEEPEHFRMDYFSVQSGSSDIATASVKLACGDEIKAEAANGNGPVDAIYQAINRVTGYDVELVKYDLSAKGHGKDALGQVDIVVTYNGRRFHGVGLATDIVESSAKAMVHVLNNIWRAAEVEKELQRKAQNKENNKETV.

Residues 5–267 (VVIFDTTLRD…QTRINHNEIW (263 aa)) form the Pyruvate carboxyltransferase domain. Mn(2+) contacts are provided by aspartate 14, histidine 202, histidine 204, and asparagine 238. Positions 392–523 (RMDYFSVQSG…QNKENNKETV (132 aa)) are regulatory domain.

It belongs to the alpha-IPM synthase/homocitrate synthase family. LeuA type 1 subfamily. Homodimer. It depends on Mn(2+) as a cofactor.

The protein resides in the cytoplasm. It catalyses the reaction 3-methyl-2-oxobutanoate + acetyl-CoA + H2O = (2S)-2-isopropylmalate + CoA + H(+). It functions in the pathway amino-acid biosynthesis; L-leucine biosynthesis; L-leucine from 3-methyl-2-oxobutanoate: step 1/4. Its function is as follows. Catalyzes the condensation of the acetyl group of acetyl-CoA with 3-methyl-2-oxobutanoate (2-ketoisovalerate) to form 3-carboxy-3-hydroxy-4-methylpentanoate (2-isopropylmalate). In Enterobacter sp. (strain 638), this protein is 2-isopropylmalate synthase.